An 88-amino-acid chain; its full sequence is ATP synthase epsilon chain (88 aa).

Belongs to the ATPase epsilon chain family. F-type ATPases have 2 components, CF(1) - the catalytic core - and CF(0) - the membrane proton channel. CF(1) has five subunits: alpha(3), beta(3), gamma(1), delta(1), epsilon(1). CF(0) has three main subunits: a, b and c.

It is found in the cell inner membrane. Its function is as follows. Produces ATP from ADP in the presence of a proton gradient across the membrane. The protein is ATP synthase epsilon chain (atpC) of Chlorobaculum tepidum (strain ATCC 49652 / DSM 12025 / NBRC 103806 / TLS) (Chlorobium tepidum).